The primary structure comprises 276 residues: NADPH-dependent 7-cyano-7-deazaguanine reductase (276 aa).

Residue 83–85 (IES) coordinates substrate. 85–86 (SK) serves as a coordination point for NADPH. Residue Cys184 is the Thioimide intermediate of the active site. The active-site Proton donor is Asp191. 223 to 224 (HE) contributes to the substrate binding site. 252–253 (RG) is a binding site for NADPH.

This sequence belongs to the GTP cyclohydrolase I family. QueF type 2 subfamily. Homodimer.

The protein resides in the cytoplasm. The catalysed reaction is 7-aminomethyl-7-carbaguanine + 2 NADP(+) = 7-cyano-7-deazaguanine + 2 NADPH + 3 H(+). It functions in the pathway tRNA modification; tRNA-queuosine biosynthesis. Its function is as follows. Catalyzes the NADPH-dependent reduction of 7-cyano-7-deazaguanine (preQ0) to 7-aminomethyl-7-deazaguanine (preQ1). The protein is NADPH-dependent 7-cyano-7-deazaguanine reductase of Pseudomonas entomophila (strain L48).